The primary structure comprises 441 residues: Glutamyl-tRNA reductase (441 aa).

Substrate-binding positions include 49–52, S109, 114–116, and Q120; these read TCNR and EDQ. C50 (nucleophile) is an active-site residue. 190 to 195 provides a ligand contact to NADP(+); it reads GAGKMS.

This sequence belongs to the glutamyl-tRNA reductase family. As to quaternary structure, homodimer.

It carries out the reaction (S)-4-amino-5-oxopentanoate + tRNA(Glu) + NADP(+) = L-glutamyl-tRNA(Glu) + NADPH + H(+). It participates in porphyrin-containing compound metabolism; protoporphyrin-IX biosynthesis; 5-aminolevulinate from L-glutamyl-tRNA(Glu): step 1/2. In terms of biological role, catalyzes the NADPH-dependent reduction of glutamyl-tRNA(Glu) to glutamate 1-semialdehyde (GSA). The polypeptide is Glutamyl-tRNA reductase (Moorella thermoacetica (strain ATCC 39073 / JCM 9320)).